Here is a 318-residue protein sequence, read N- to C-terminus: 1-aminocyclopropane-1-carboxylate oxidase (318 aa).

Residues 153 to 253 form the Fe2OG dioxygenase domain; that stretch reads PNFGTKVANY…RMSIASFYNP (101 aa). Fe cation is bound by residues His-177, Asp-179, and His-234.

This sequence belongs to the iron/ascorbate-dependent oxidoreductase family. Fe cation is required as a cofactor.

It catalyses the reaction 1-aminocyclopropane-1-carboxylate + L-ascorbate + O2 = ethene + L-dehydroascorbate + hydrogen cyanide + CO2 + 2 H2O. The protein operates within alkene biosynthesis; ethylene biosynthesis via S-adenosyl-L-methionine; ethylene from S-adenosyl-L-methionine: step 2/2. In Diospyros kaki (Kaki persimmon), this protein is 1-aminocyclopropane-1-carboxylate oxidase (DK-ACO1).